The primary structure comprises 352 residues: tRNA pseudouridine synthase D (352 aa).

D81 acts as the Nucleophile in catalysis. Residues 157-303 enclose the TRUD domain; it reads GVPNYFGTQR…MDHERRILRL (147 aa).

Belongs to the pseudouridine synthase TruD family.

It carries out the reaction uridine(13) in tRNA = pseudouridine(13) in tRNA. In terms of biological role, responsible for synthesis of pseudouridine from uracil-13 in transfer RNAs. This chain is tRNA pseudouridine synthase D, found in Pseudomonas putida (strain ATCC 47054 / DSM 6125 / CFBP 8728 / NCIMB 11950 / KT2440).